We begin with the raw amino-acid sequence, 601 residues long: MGLCTSKPNSSNSDQTPARNSPLPASESVKPSSSSVNGEDQCVTTTNNEGKKSPFFPFYSPSPAHYFFSKKTPARSPATNSTNSTPKRFFKRPFPPPSPAKHIRAVLARRHGSVKPNSSAIPEGSEAEGGGVGLDKSFGFSKSFASKYELGDEVGRGHFGYTCAAKFKKGDNKGQQVAVKVIPKAKMTTAIAIEDVRREVKILRALSGHNNLPHFYDAYEDHDNVYIVMELCEGGELLDRILSRGGKYTEEDAKTVMIQILNVVAFCHLQGVVHRDLKPENFLFTSKEDTSQLKAIDFGLSDYVRPDERLNDIVGSAYYVAPEVLHRSYSTEADIWSVGVIVYILLCGSRPFWARTESGIFRAVLKADPSFDDPPWPLLSSEARDFVKRLLNKDPRKRLTAAQALSHPWIKDSNDAKVPMDILVFKLMRAYLRSSSLRKAALRALSKTLTVDELFYLREQFALLEPSKNGTISLENIKSALMKMATDAMKDSRIPEFLGQLSALQYRRMDFEEFCAAALSVHQLEALDRWEQHARCAYELFEKEGNRPIMIDELASELGLGPSVPVHAVLHDWLRHTDGKLSFLGFVKLLHGVSSRTIKAH.

Over residues 1-19 the composition is skewed to polar residues; sequence MGLCTSKPNSSNSDQTPAR. 2 disordered regions span residues 1-55 and 70-98; these read MGLC…KSPF and KKTP…PPPS. The N-myristoyl glycine moiety is linked to residue Gly-2. The span at 26–35 shows a compositional bias: low complexity; the sequence is SESVKPSSSS. The span at 36–48 shows a compositional bias: polar residues; sequence VNGEDQCVTTTNN. Residues 148 to 410 form the Protein kinase domain; sequence YELGDEVGRG…AAQALSHPWI (263 aa). Residues 154-162 and Lys-180 each bind ATP; that span reads VGRGHFGYT. Residue Asp-276 is the Proton acceptor of the active site. Ser-316 is subject to Phosphoserine. The tract at residues 415-445 is autoinhibitory domain; the sequence is DAKVPMDILVFKLMRAYLRSSSLRKAALRAL. The segment at 434–454 is calmodulin binding (CaMBD); that stretch reads SSSLRKAALRALSKTLTVDEL. 4 EF-hand domains span residues 452–488, 489–524, 525–564, and 567–596; these read DELF…ATDA, MKDS…VHQL, EALD…GPSV, and HAVL…VSSR. Ser-467, Asn-469, Thr-471, Asn-476, Arg-508, Glu-513, Asn-546, Glu-553, Asp-578, and Lys-580 together coordinate Ca(2+). A Phosphoserine modification is found at Ser-582.

Belongs to the protein kinase superfamily. Ser/Thr protein kinase family. CDPK subfamily. In terms of assembly, binds calmodulin (CaM) in a calcium-dependent manner.

It is found in the membrane. The catalysed reaction is L-seryl-[protein] + ATP = O-phospho-L-seryl-[protein] + ADP + H(+). The enzyme catalyses L-threonyl-[protein] + ATP = O-phospho-L-threonyl-[protein] + ADP + H(+). Its activity is regulated as follows. Activated by calcium and calmodulin. Autophosphorylation may play an important role in the regulation of the kinase activity. In terms of biological role, may play a role in signal transduction pathways that involve calcium as a second messenger. The protein is CDPK-related kinase 5 (CRK5) of Arabidopsis thaliana (Mouse-ear cress).